The sequence spans 248 residues: Proteasome subunit alpha (248 aa).

The protein belongs to the peptidase T1A family. The 20S proteasome core is composed of 14 alpha and 14 beta subunits that assemble into four stacked heptameric rings, resulting in a barrel-shaped structure. The two inner rings, each composed of seven catalytic beta subunits, are sandwiched by two outer rings, each composed of seven alpha subunits. The catalytic chamber with the active sites is on the inside of the barrel. Has a gated structure, the ends of the cylinder being occluded by the N-termini of the alpha-subunits. Is capped by the proteasome-associated ATPase, ARC.

It is found in the cytoplasm. It participates in protein degradation; proteasomal Pup-dependent pathway. The formation of the proteasomal ATPase ARC-20S proteasome complex, likely via the docking of the C-termini of ARC into the intersubunit pockets in the alpha-rings, may trigger opening of the gate for substrate entry. Interconversion between the open-gate and close-gate conformations leads to a dynamic regulation of the 20S proteasome proteolysis activity. Functionally, component of the proteasome core, a large protease complex with broad specificity involved in protein degradation. The chain is Proteasome subunit alpha from Mycobacterium tuberculosis (strain ATCC 25177 / H37Ra).